Here is a 796-residue protein sequence, read N- to C-terminus: RalBP1-associated Eps domain-containing protein 1 (796 aa).

The EH 1 domain occupies 10-113; it reads EQKYYSDLFS…SKNEQESRHA (104 aa). Residues 105-237 are disordered; the sequence is KNEQESRHAA…ENWVSFADTP (133 aa). Polar residues predominate over residues 115–126; that stretch reads SYSSDSENQGSY. Serine 143, serine 145, serine 162, serine 166, and serine 170 each carry phosphoserine. Over residues 145–156 the composition is skewed to polar residues; that stretch reads SHDTVQPRTSAD. The residue at position 173 (threonine 173) is a Phosphothreonine. 2 positions are modified to phosphoserine: serine 272 and serine 273. Residues 285 to 374 form the EH 2 domain; that stretch reads QRQYYVNQFK…ESLMPKLIDL (90 aa). Residue tyrosine 288 is modified to Phosphotyrosine. The residue at position 307 (serine 307) is a Phosphoserine. Residues 318–353 enclose the EF-hand domain; the sequence is LPILELSHIWELSDFDKDGALTLDEFCAAFHLVVAR. Ca(2+)-binding residues include aspartate 331, aspartate 333, aspartate 335, and glutamate 342. The disordered stretch occupies residues 377–433; the sequence is SADVGDQPGEVGYSGSPAEAPPSKSPSMPSLNQTWPELNQSSEQWETFSERSSSSQT. Polar residues predominate over residues 407–433; that stretch reads LNQTWPELNQSSEQWETFSERSSSSQT. Phosphoserine is present on residues serine 475, serine 482, serine 489, and serine 540. Residues 506–543 are compositionally biased toward polar residues; the sequence is GNTVADGYSSSDSFTSDPEQIGSNVTRQRSHSGTSPDN. 2 disordered regions span residues 506-624 and 638-725; these read GNTV…IPEQ and ASNV…QKTG. Phosphothreonine is present on threonine 544. Positions 544–554 are enriched in pro residues; the sequence is TAPPPPPPRPQ. Phosphoserine is present on serine 562. Residues 563-574 are compositionally biased toward polar residues; sequence LDMNRTFTVTTG. Residues 575–584 show a composition bias toward low complexity; it reads QQQAGVVAHP. The span at 585–596 shows a compositional bias: pro residues; that stretch reads PAVPPRPQPSQA. Residues 612–623 are compositionally biased toward polar residues; sequence THTSTSPQQIPE. Positions 652–796 are interaction with RALBP1; it reads HPEVLPAEKA…LEQLRPFSHL (145 aa). Composition is skewed to basic and acidic residues over residues 671 to 681 and 708 to 722; these read AKTDSKTEEKT and KSED…EHTQ. A phosphoserine mark is found at serine 709 and serine 740. Residues 751–791 are a coiled coil; sequence SIRRNKETNTVLARLNSELQQQLKDVLEERISLEVQLEQLR.

In terms of assembly, homodimer (Potential). Interacts with RAB11FIP2. Interacts with RALBP1, CRK and GRB2. Binding to RALBP1 does not affect its Ral-binding activity. Forms a complex with the SH3 domains of CRK and GRB2 which may link it to an EGF-responsive tyrosine kinase. Interacts with AMPH, ITSN1 (via SH3 domains) and SGIP1; may be involved in clathrin-mediated endocytosis. Post-translationally, EGF stimulates phosphorylation on Tyr-residues. In terms of tissue distribution, widely expressed with highest levels in heart and testis.

The protein resides in the membrane. It is found in the clathrin-coated pit. Its function is as follows. May coordinate the cellular actions of activated EGF receptors and Ral-GTPases. The sequence is that of RalBP1-associated Eps domain-containing protein 1 (REPS1) from Homo sapiens (Human).